Reading from the N-terminus, the 281-residue chain is Probable feruloyl esterase A (281 aa).

Positions 1-21 (MKNFFSMHAILLACSAGAGLA) are cleaved as a signal peptide. 3 disulfide bridges follow: cysteine 50–cysteine 279, cysteine 112–cysteine 115, and cysteine 248–cysteine 255. Aspartate 98 is a binding site for substrate. An N-linked (GlcNAc...) asparagine glycan is attached at asparagine 100. Residue tyrosine 101 participates in substrate binding. The active-site Nucleophile is the serine 154. Residue asparagine 173 is glycosylated (N-linked (GlcNAc...) asparagine). Aspartate 215 functions as the Charge relay system in the catalytic mechanism. Histidine 268 is a substrate binding site. Catalysis depends on histidine 268, which acts as the Charge relay system.

The protein belongs to the AB hydrolase superfamily. FaeA family.

It localises to the secreted. The catalysed reaction is feruloyl-polysaccharide + H2O = ferulate + polysaccharide.. Functionally, involved in degradation of plant cell walls. Hydrolyzes the feruloyl-arabinose ester bond in arabinoxylans, and the feruloyl-galactose ester bond in pectin. This chain is Probable feruloyl esterase A (faeA), found in Aspergillus oryzae (strain ATCC 42149 / RIB 40) (Yellow koji mold).